The following is a 206-amino-acid chain: FMN-dependent NADH:quinone oxidoreductase (206 aa).

FMN-binding positions include Ser9, 15-17 (SVS), 95-98 (MYNF), and 139-142 (SRGG).

It belongs to the azoreductase type 1 family. In terms of assembly, homodimer. FMN serves as cofactor.

It carries out the reaction 2 a quinone + NADH + H(+) = 2 a 1,4-benzosemiquinone + NAD(+). The catalysed reaction is N,N-dimethyl-1,4-phenylenediamine + anthranilate + 2 NAD(+) = 2-(4-dimethylaminophenyl)diazenylbenzoate + 2 NADH + 2 H(+). Quinone reductase that provides resistance to thiol-specific stress caused by electrophilic quinones. Its function is as follows. Also exhibits azoreductase activity. Catalyzes the reductive cleavage of the azo bond in aromatic azo compounds to the corresponding amines. The polypeptide is FMN-dependent NADH:quinone oxidoreductase (Legionella pneumophila subsp. pneumophila (strain Philadelphia 1 / ATCC 33152 / DSM 7513)).